The chain runs to 176 residues: Shikimate kinase (176 aa).

Residue 12 to 17 (GSGKST) coordinates ATP. Position 16 (Ser-16) interacts with Mg(2+). The substrate site is built by Asp-34, Arg-58, and Gly-80. ATP is bound at residue Arg-117. Arg-136 contributes to the substrate binding site. Residue Arg-153 participates in ATP binding.

It belongs to the shikimate kinase family. In terms of assembly, monomer. It depends on Mg(2+) as a cofactor.

It is found in the cytoplasm. It catalyses the reaction shikimate + ATP = 3-phosphoshikimate + ADP + H(+). It functions in the pathway metabolic intermediate biosynthesis; chorismate biosynthesis; chorismate from D-erythrose 4-phosphate and phosphoenolpyruvate: step 5/7. Functionally, catalyzes the specific phosphorylation of the 3-hydroxyl group of shikimic acid using ATP as a cosubstrate. This is Shikimate kinase from Mycobacterium bovis (strain ATCC BAA-935 / AF2122/97).